Consider the following 77-residue polypeptide: MANIKSAIKRAELNVKANEKNSAQKSAMRTAIKAFEANPSEELFRAASSSIDKAESKGLIHKNKASRDKARLAAKLG.

The tract at residues 47-77 is disordered; the sequence is ASSSIDKAESKGLIHKNKASRDKARLAAKLG.

The protein belongs to the bacterial ribosomal protein bS20 family.

Functionally, binds directly to 16S ribosomal RNA. This chain is Small ribosomal subunit protein bS20, found in Streptococcus pyogenes serotype M1.